Reading from the N-terminus, the 208-residue chain is Sodium/potassium-transporting ATPase subunit beta-1-interacting protein 2 (208 aa).

Transmembrane regions (helical) follow at residues 1–23, 35–55, 62–82, and 153–173; these read MGYCSGRCTLIFICGMQLVCVLE, APILANFVHIIIVILGLFGTI, ITGYAVWLVLWVTWNVFVICF, and LQIVLALAGFIYACYVVKCIT.

It belongs to the NKAIN family. In terms of assembly, interacts with ATP1B1. In terms of tissue distribution, expressed in fetal brain. Weakly expressed in adult brain and thymus. Not expressed in any other normal tissue examined.

It is found in the cell membrane. This is Sodium/potassium-transporting ATPase subunit beta-1-interacting protein 2 (NKAIN2) from Homo sapiens (Human).